Here is a 209-residue protein sequence, read N- to C-terminus: 3-demethoxyubiquinol 3-hydroxylase (209 aa).

Fe cation-binding residues include E58, E88, H91, E140, E172, and H175.

The protein belongs to the COQ7 family. Fe cation is required as a cofactor.

Its subcellular location is the cell membrane. The catalysed reaction is a 5-methoxy-2-methyl-3-(all-trans-polyprenyl)benzene-1,4-diol + AH2 + O2 = a 3-demethylubiquinol + A + H2O. It functions in the pathway cofactor biosynthesis; ubiquinone biosynthesis. Its function is as follows. Catalyzes the hydroxylation of 2-nonaprenyl-3-methyl-6-methoxy-1,4-benzoquinol during ubiquinone biosynthesis. The protein is 3-demethoxyubiquinol 3-hydroxylase of Polaromonas sp. (strain JS666 / ATCC BAA-500).